The sequence spans 586 residues: Succinate dehydrogenase flavoprotein subunit (586 aa).

FAD is bound by residues 10–15 and 33–48; these read GGGLAG and SIVP…AQGG. Tele-8alpha-FAD histidine is present on His-41. His-236 and Ser-250 together coordinate substrate. Residue Arg-285 is the Proton acceptor of the active site. His-352 contributes to the substrate binding site. Residue Glu-376 coordinates FAD. Position 386 (Arg-386) interacts with substrate. 391 to 392 serves as a coordination point for FAD; sequence SL.

This sequence belongs to the FAD-dependent oxidoreductase 2 family. FRD/SDH subfamily. In B.subtilis succinate dehydrogenase forms part of an enzyme complex containing three subunits: a flavoprotein, an iron-sulfur protein and cytochrome b-558. Interacts with FloT. It depends on FAD as a cofactor.

It is found in the cell membrane. The protein resides in the membrane raft. It catalyses the reaction a quinone + succinate = fumarate + a quinol. It functions in the pathway carbohydrate metabolism; tricarboxylic acid cycle; fumarate from succinate (bacterial route): step 1/1. The sequence is that of Succinate dehydrogenase flavoprotein subunit (sdhA) from Bacillus subtilis (strain 168).